A 210-amino-acid polypeptide reads, in one-letter code: Na(+)-translocating NADH-quinone reductase subunit D (210 aa).

The next 5 helical transmembrane spans lie at 42–62 (FVMTLAVTFVTALSNFFVSLI), 72–92 (IIVQMAIIASLVIVVDQILKA), 103–123 (VFVGLIITNCIVMGRAEAFAM), 131–151 (LIDGIGNGLGYGFVLITVGFF), and 178–198 (NGLMLLAPSAFFLIGFMIWAI).

This sequence belongs to the NqrDE/RnfAE family. In terms of assembly, composed of six subunits; NqrA, NqrB, NqrC, NqrD, NqrE and NqrF.

Its subcellular location is the cell inner membrane. The enzyme catalyses a ubiquinone + n Na(+)(in) + NADH + H(+) = a ubiquinol + n Na(+)(out) + NAD(+). NQR complex catalyzes the reduction of ubiquinone-1 to ubiquinol by two successive reactions, coupled with the transport of Na(+) ions from the cytoplasm to the periplasm. NqrA to NqrE are probably involved in the second step, the conversion of ubisemiquinone to ubiquinol. The polypeptide is Na(+)-translocating NADH-quinone reductase subunit D (Vibrio vulnificus (strain CMCP6)).